The chain runs to 130 residues: Small ribosomal subunit protein uS8 (130 aa).

The protein belongs to the universal ribosomal protein uS8 family. In terms of assembly, part of the 30S ribosomal subunit. Contacts proteins S5 and S12.

One of the primary rRNA binding proteins, it binds directly to 16S rRNA central domain where it helps coordinate assembly of the platform of the 30S subunit. The protein is Small ribosomal subunit protein uS8 of Ruegeria pomeroyi (strain ATCC 700808 / DSM 15171 / DSS-3) (Silicibacter pomeroyi).